Consider the following 375-residue polypeptide: Chaperone protein DnaJ (375 aa).

The region spanning 5–70 is the J domain; that stretch reads DFYEVLGVEK…QKRAQYDQFG (66 aa). A CR-type zinc finger spans residues 134–216; it reads GVEKEVSITK…CKGKGTVRKQ (83 aa). 8 residues coordinate Zn(2+): C147, C150, C164, C167, C190, C193, C204, and C207. CXXCXGXG motif repeat units lie at residues 147-154, 164-171, 190-197, and 204-211; these read CETCTGTG, CPKCNGSG, CDMCGGKG, and CSDCKGKG.

It belongs to the DnaJ family. Homodimer. It depends on Zn(2+) as a cofactor.

Its subcellular location is the cytoplasm. In terms of biological role, participates actively in the response to hyperosmotic and heat shock by preventing the aggregation of stress-denatured proteins and by disaggregating proteins, also in an autonomous, DnaK-independent fashion. Unfolded proteins bind initially to DnaJ; upon interaction with the DnaJ-bound protein, DnaK hydrolyzes its bound ATP, resulting in the formation of a stable complex. GrpE releases ADP from DnaK; ATP binding to DnaK triggers the release of the substrate protein, thus completing the reaction cycle. Several rounds of ATP-dependent interactions between DnaJ, DnaK and GrpE are required for fully efficient folding. Also involved, together with DnaK and GrpE, in the DNA replication of plasmids through activation of initiation proteins. The protein is Chaperone protein DnaJ of Clostridium tetani (strain Massachusetts / E88).